A 916-amino-acid chain; its full sequence is Isoleucine--tRNA ligase (916 aa).

The 'HIGH' region signature appears at 58–68 (PYANGHLHIGH). E568 provides a ligand contact to L-isoleucyl-5'-AMP. The 'KMSKS' region signature appears at 609-613 (KMSKS). ATP is bound at residue K612. Positions 891, 894, 906, and 909 each coordinate Zn(2+).

Belongs to the class-I aminoacyl-tRNA synthetase family. IleS type 1 subfamily. In terms of assembly, monomer. Zn(2+) serves as cofactor.

It is found in the cytoplasm. The enzyme catalyses tRNA(Ile) + L-isoleucine + ATP = L-isoleucyl-tRNA(Ile) + AMP + diphosphate. Catalyzes the attachment of isoleucine to tRNA(Ile). As IleRS can inadvertently accommodate and process structurally similar amino acids such as valine, to avoid such errors it has two additional distinct tRNA(Ile)-dependent editing activities. One activity is designated as 'pretransfer' editing and involves the hydrolysis of activated Val-AMP. The other activity is designated 'posttransfer' editing and involves deacylation of mischarged Val-tRNA(Ile). The sequence is that of Isoleucine--tRNA ligase from Campylobacter fetus subsp. fetus (strain 82-40).